A 480-amino-acid chain; its full sequence is Methylenetetrahydrofolate--tRNA-(uracil-5-)-methyltransferase TrmFO (480 aa).

Glycine 15–glycine 20 serves as a coordination point for FAD.

The protein belongs to the MnmG family. TrmFO subfamily. FAD is required as a cofactor.

It is found in the cytoplasm. It carries out the reaction uridine(54) in tRNA + (6R)-5,10-methylene-5,6,7,8-tetrahydrofolate + NADH + H(+) = 5-methyluridine(54) in tRNA + (6S)-5,6,7,8-tetrahydrofolate + NAD(+). The enzyme catalyses uridine(54) in tRNA + (6R)-5,10-methylene-5,6,7,8-tetrahydrofolate + NADPH + H(+) = 5-methyluridine(54) in tRNA + (6S)-5,6,7,8-tetrahydrofolate + NADP(+). In terms of biological role, catalyzes the folate-dependent formation of 5-methyl-uridine at position 54 (M-5-U54) in all tRNAs. The chain is Methylenetetrahydrofolate--tRNA-(uracil-5-)-methyltransferase TrmFO from Caulobacter sp. (strain K31).